The chain runs to 169 residues: MLRSEKPEVVEEIASIYKDSPSVIVAHYHGLTVSEVNSLRESLKSKDAGFKVVKNTLAKIAANKAGLDDIVSLFSGPTAIVYSKEPVEMAKLVVNFAKSNENLKIVGGIVDKQVLNEHSIKELSKLPSLNELRSKIVGLLQAPATKIAGVLQAPSSSLARVIQANASKN.

The protein belongs to the universal ribosomal protein uL10 family. As to quaternary structure, part of the ribosomal stalk of the 50S ribosomal subunit. The N-terminus interacts with L11 and the large rRNA to form the base of the stalk. The C-terminus forms an elongated spine to which L12 dimers bind in a sequential fashion forming a multimeric L10(L12)X complex.

Forms part of the ribosomal stalk, playing a central role in the interaction of the ribosome with GTP-bound translation factors. In Rickettsia bellii (strain OSU 85-389), this protein is Large ribosomal subunit protein uL10.